A 312-amino-acid chain; its full sequence is Short chain dehydrogenase pgmD (312 aa).

Residues Val-46, Ile-47, Lys-171, Tyr-207, Lys-211, and Thr-242 each contribute to the NADP(+) site. The active-site Proton donor is Tyr-207. Lys-211 functions as the Lowers pKa of active site Tyr in the catalytic mechanism.

The protein belongs to the short-chain dehydrogenases/reductases (SDR) family.

The protein operates within pigment biosynthesis. It participates in secondary metabolite biosynthesis. In terms of biological role, short chain dehydrogenase; part of the gene cluster that mediates the biosynthesis of pleosporalin A, ascomycone A, as well as a third cryptic naphthoquinone derived pigment, all responsible for the coloration of conidia. Essential for the production of pleosporalin A, but not the 2 other final products. The pathway begins with the biosynthesis of the cyclized heptaketide 3-acetonyl-1,6,8-trihydroxy-2-naphthaldehyde by the NR-PKS pgmA. The C-6 hydroxyl group is further methylated by the O-methyltransferase pgmB to yield fusarubinaldehyde which is in turn oxidized by the cytochrome P450 monooxygenase pgmC at C-9. The C-1 hydroxyl group is then methylated spontaneously. Although pgmE, pgmD and pgmH are essential for the production of pleosporalin A, it is not the case for the 2 other final products and it remains difficult to assign a specific function to each enzyme. PgmF and pgmG seem not to be involved in pigment biosynthesis although they were regulated by the cluster-specific transcription factor pgmR. This is Short chain dehydrogenase pgmD from Aspergillus terreus (strain NIH 2624 / FGSC A1156).